We begin with the raw amino-acid sequence, 167 residues long: ATP synthase subunit b (167 aa).

A helical membrane pass occupies residues 7-25 (SFLLAVSFVIFIYLIYRPA).

This sequence belongs to the ATPase B chain family. In terms of assembly, F-type ATPases have 2 components, F(1) - the catalytic core - and F(0) - the membrane proton channel. F(1) has five subunits: alpha(3), beta(3), gamma(1), delta(1), epsilon(1). F(0) has three main subunits: a(1), b(2) and c(10-14). The alpha and beta chains form an alternating ring which encloses part of the gamma chain. F(1) is attached to F(0) by a central stalk formed by the gamma and epsilon chains, while a peripheral stalk is formed by the delta and b chains.

The protein resides in the cell inner membrane. F(1)F(0) ATP synthase produces ATP from ADP in the presence of a proton or sodium gradient. F-type ATPases consist of two structural domains, F(1) containing the extramembraneous catalytic core and F(0) containing the membrane proton channel, linked together by a central stalk and a peripheral stalk. During catalysis, ATP synthesis in the catalytic domain of F(1) is coupled via a rotary mechanism of the central stalk subunits to proton translocation. Functionally, component of the F(0) channel, it forms part of the peripheral stalk, linking F(1) to F(0). The sequence is that of ATP synthase subunit b from Rickettsia typhi (strain ATCC VR-144 / Wilmington).